The sequence spans 473 residues: Mitochondrial adenyl nucleotide antiporter SLC25A24-B (473 aa).

The segment at 1 to 173 (MLEQVQKFLL…RYWKHSTVLD (173 aa)) is regulatory N-terminal domain. At 1-197 (MLEQVQKFLL…EKKTGQWWKQ (197 aa)) the chain is on the mitochondrial intermembrane side. EF-hand domains lie at 19-54 (DSQSRYEELFHKLDVNKDGKVDILELQEGLKAMGME), 55-88 (VGKGAEEKIVAAGDTNKDGHLDFGEFIRYLEEHE), 86-121 (EHEKKMKIAFTSLDKNKDGKIESAEIMNSLKVLGIK), and 122-157 (ISLDHADKILKSMDSDGTLTVDWNEWRDHFLFNPAD). The Ca(2+) site is built by Asp-32, Asn-34, Asp-36, Lys-38, Glu-43, Asp-68, Asn-70, Asp-72, His-74, Glu-79, Asp-99, Asn-101, Asp-103, Lys-105, Glu-110, Asp-135, Asp-137, Thr-139, Thr-141, and Glu-146. The linker region stretch occupies residues 159–168 (IQQIIRYWKH). Residues 174 to 473 (IGDSLTIPDE…YEKMKVQLGI (300 aa)) are C-terminal transmembrane transporter domain. Solcar repeat units follow at residues 192–277 (GQWW…YKKL), 285–370 (LGTA…LKNY), and 382–470 (PGVL…MKVQ). Residues 198–215 (LMAGGMAGAVSRTGTAPL) form a helical membrane-spanning segment. At 216–251 (DRLKVMMQVHGSKGNSNIITGLKQMVKEGGIRSLWR) the chain is on the mitochondrial matrix side. A helical transmembrane segment spans residues 252–271 (GNGVNVIKIAPETAMKFWAY). The Mitochondrial intermembrane portion of the chain corresponds to 272–294 (EQYKKLFTSESGKLGTAERFVAG). The chain crosses the membrane as a helical span at residues 295 to 308 (SLAGATAQTSIYPM). Residues 309–344 (EVLKTRLAVGRTGQYSGMFDCAKKIMQKEGIRAFYK) lie on the Mitochondrial matrix side of the membrane. The chain crosses the membrane as a helical span at residues 345–364 (GYIPNILGIIPYAGIDLAIY). The Mitochondrial intermembrane segment spans residues 365 to 387 (ETLKNYWLQNHAKDSANPGVLVL). A helical membrane pass occupies residues 388–405 (LGCGTASSTCGQLASYPL). The Mitochondrial matrix segment spans residues 406-444 (ALIRTRMQAQASIEGAPQLNMGGLFRKIVAKEGFLGLYR). The chain crosses the membrane as a helical span at residues 445 to 464 (GIGPNFLKVLPAVSISYVVY). Over 465–473 (EKMKVQLGI) the chain is Mitochondrial intermembrane.

The protein belongs to the mitochondrial carrier (TC 2.A.29) family. Monomer.

Its subcellular location is the mitochondrion inner membrane. The enzyme catalyses Mg(2+)(out) + phosphate(in) + ATP(out) = Mg(2+)(in) + phosphate(out) + ATP(in). It carries out the reaction ADP(out) + phosphate(in) + H(+)(out) = ADP(in) + phosphate(out) + H(+)(in). It catalyses the reaction AMP(out) + phosphate(in) = AMP(in) + phosphate(out). The catalysed reaction is phosphate(in) + ATP(out) + 2 H(+)(out) = phosphate(out) + ATP(in) + 2 H(+)(in). The enzyme catalyses dADP(in) + ADP(out) = dADP(out) + ADP(in). It carries out the reaction Mg(2+)(in) + ADP(out) + ATP(in) + H(+)(out) = Mg(2+)(out) + ADP(in) + ATP(out) + H(+)(in). It catalyses the reaction ADP(out) + diphosphate(in) = ADP(in) + diphosphate(out). The catalysed reaction is dAMP(in) + ADP(out) + H(+)(out) = dAMP(out) + ADP(in) + H(+)(in). The enzyme catalyses 3'-AMP(in) + ADP(out) + H(+)(out) = 3'-AMP(out) + ADP(in) + H(+)(in). It carries out the reaction dAMP(out) + phosphate(in) = dAMP(in) + phosphate(out). It catalyses the reaction 3'-AMP(out) + phosphate(in) = 3'-AMP(in) + phosphate(out). The catalysed reaction is dADP(out) + phosphate(in) + H(+)(out) = dADP(in) + phosphate(out) + H(+)(in). With respect to regulation, activated by an increase in cytosolic calcium levels that induce a conformational change of the N-terminal regulatory domain, uncapping the channel and allowing transport. Inhibited by bathophenanthroline, mersalyl, p-hydroxymercuribenzoate, bromcresol purple and tannic acid. Functionally, electroneutral antiporter that mediates the transport of adenyl nucleotides through the inner mitochondrial membrane. Originally identified as an ATP-magnesium/inorganic phosphate antiporter, it also acts as a broad specificity adenyl nucleotide antiporter. By regulating the mitochondrial matrix adenyl nucleotide pool could adapt to changing cellular energetic demands and indirectly regulate adenyl nucleotide-dependent metabolic pathways. This Xenopus laevis (African clawed frog) protein is Mitochondrial adenyl nucleotide antiporter SLC25A24-B (slc25a24-b).